A 173-amino-acid polypeptide reads, in one-letter code: MSEQERETEEDEGVASDTAPMLPRRRPTDYHISVLAPILATRGLGTLVLSGRALVGFLLHLLLPGTVFLLVLLPAAAVVYLGFLCHSRVHPAPGPRCRALLSDRGSAALIVFGLLSLPPLVVLAAAARSLLVRRLRPALPDPARTPAPRRPPRSSGDLADGHPDEDKQLCAWV.

A compositionally biased stretch (acidic residues) spans 1–14 (MSEQERETEEDEGV). Residues 1-25 (MSEQERETEEDEGVASDTAPMLPRR) are disordered. 3 consecutive transmembrane segments (helical) span residues 31–51 (HISVLAPILATRGLGTLVLSG), 53–73 (ALVGFLLHLLLPGTVFLLVLL), and 107–127 (AALIVFGLLSLPPLVVLAAAA). A disordered region spans residues 141-165 (DPARTPAPRRPPRSSGDLADGHPDE).

The protein belongs to the TMEM88 family.

It localises to the membrane. This Mus musculus (Mouse) protein is Transmembrane protein 278 (Tmem278).